The chain runs to 477 residues: Proline--tRNA ligase (477 aa).

It belongs to the class-II aminoacyl-tRNA synthetase family. ProS type 3 subfamily. Homodimer.

The protein localises to the cytoplasm. It catalyses the reaction tRNA(Pro) + L-proline + ATP = L-prolyl-tRNA(Pro) + AMP + diphosphate. Catalyzes the attachment of proline to tRNA(Pro) in a two-step reaction: proline is first activated by ATP to form Pro-AMP and then transferred to the acceptor end of tRNA(Pro). The protein is Proline--tRNA ligase of Lachnoclostridium phytofermentans (strain ATCC 700394 / DSM 18823 / ISDg) (Clostridium phytofermentans).